The primary structure comprises 169 residues: Co-chaperone protein HscB homolog (169 aa).

The region spanning 2–74 (NYFDLFSLPV…CLRAQYLLLL (73 aa)) is the J domain.

It belongs to the HscB family. Interacts with HscA and stimulates its ATPase activity.

Co-chaperone involved in the maturation of iron-sulfur cluster-containing proteins. Seems to help targeting proteins to be folded toward HscA. This Psychromonas ingrahamii (strain DSM 17664 / CCUG 51855 / 37) protein is Co-chaperone protein HscB homolog.